Reading from the N-terminus, the 739-residue chain is Transcription regulator protein BACH1 (739 aa).

One can recognise a BTB domain in the interval 34–100; it reads CDVTVLVEGQ…AYTAKLILSK (67 aa). Position 196 is a phosphoserine (serine 196). Disordered stretches follow at residues 287 to 321 and 344 to 391; these read MESE…PHGL and KTVK…RSSV. Basic and acidic residues-rich tracts occupy residues 346 to 364 and 376 to 391; these read VKTE…KPSE and PKED…RSSV. Residue serine 448 is modified to Phosphoserine. Residues 560–623 form the bZIP domain; that stretch reads CIHDIRRRSK…GETKQNLTGL (64 aa). The tract at residues 565–581 is basic motif; it reads RRRSKNRIAAQRCRKRK. The segment at 585–592 is leucine-zipper; the sequence is IQNLESEI. A disordered region spans residues 679 to 708; the sequence is PPTAPPPCGRGSSAASQELVQESPPTTAAA. Low complexity predominate over residues 699–708; the sequence is QESPPTTAAA.

Belongs to the bZIP family. CNC subfamily. As to quaternary structure, heterodimer of BACH1 and MAFK. Post-translationally, ubiquitinated by the SCF(FBXL17) complex or by the by the SCF(FBXO22) complex, leading to its degradation by the proteasome. Under oxidative stress, reactive oxygen species covalently modify cysteine residues on the bZIP domain of BACH1 and release it from chromatin. If the BTB domain of BACH1 remains intact, its beta1-alpha6 degron is recognized by FBXO22, promoting its ubiquitination and degradation. If the structural integrity of the beta1-alpha6 degron is compromised, FBXL17 will transiently associate with the BACH1 BTB dimer and remodel it into stably bound monomer for ubiquitination and degradation. As to expression, ubiquitous.

The protein localises to the nucleus. In terms of biological role, transcriptional regulator that acts as a repressor or activator, depending on the context. Binds to NF-E2 DNA binding sites. Plays important roles in coordinating transcription activation and repression by MAFK. Together with MAF, represses the transcription of genes under the control of the NFE2L2 oxidative stress pathway. This is Transcription regulator protein BACH1 (Bach1) from Mus musculus (Mouse).